A 185-amino-acid chain; its full sequence is MGQQVLKSANEKMEKAVAAYSRELATVRAGRANASVLDKVQVDYYGAPTPVVQLANITVPEARLLVIQPYDKTSIGDIEKAILKADLGLNPSNDGTVIRIAFPALTEERRRDLVKVVKKYAEEAKVAVRNVRRDGNDDLKKLEKAGEITEDDLRGYTEDIQKETDKYIAKVDEIAKNKEKEIMEV.

This sequence belongs to the RRF family.

The protein localises to the cytoplasm. Responsible for the release of ribosomes from messenger RNA at the termination of protein biosynthesis. May increase the efficiency of translation by recycling ribosomes from one round of translation to another. The polypeptide is Ribosome-recycling factor (Bacillus cereus (strain ATCC 10987 / NRS 248)).